We begin with the raw amino-acid sequence, 632 residues long: Extracellular metalloproteinase 2 (632 aa).

An N-terminal signal peptide occupies residues 1 to 19; that stretch reads MHGLLLAGLAAALPLGVAG. The propeptide occupies 20–244; it reads LPARQQSGLS…VHNVVDYVAS (225 aa). Asn270 carries N-linked (GlcNAc...) asparagine glycosylation. A Zn(2+)-binding site is contributed by His429. The active site involves Glu430. Residue His433 participates in Zn(2+) binding.

It belongs to the peptidase M36 family. Zn(2+) serves as cofactor.

It is found in the secreted. Functionally, secreted metalloproteinase probably acting as a virulence factor. The protein is Extracellular metalloproteinase 2 (MEP2) of Arthroderma benhamiae (Trichophyton mentagrophytes).